Consider the following 916-residue polypeptide: Translation initiation factor IF-2 (916 aa).

The disordered stretch occupies residues 58-317 (LEAEGHLPGA…GVTVPRGDGG (260 aa)). The span at 120 to 142 (EKVAASEAADAKPAAGAPADTAK) shows a compositional bias: low complexity. Residues 195 to 206 (SNIPRPAPPRPG) show a composition bias toward pro residues. 2 stretches are compositionally biased toward gly residues: residues 214–227 (RPGG…GGRP) and 235–282 (SAGG…GRGG). Residues 283-294 (GKSKARKSKRAK) show a composition bias toward basic residues. In terms of domain architecture, tr-type G spans 409–583 (IRPPVVTVMG…LTADAGLDLR (175 aa)). Residues 418 to 425 (GHVDHGKT) form a G1 region. Residue 418-425 (GHVDHGKT) coordinates GTP. The interval 443–447 (GITQH) is G2. The G3 stretch occupies residues 468 to 471 (DTPG). GTP-binding positions include 468 to 472 (DTPGH) and 522 to 525 (NKVD). The segment at 522–525 (NKVD) is G4. Residues 558–560 (SAR) form a G5 region.

Belongs to the TRAFAC class translation factor GTPase superfamily. Classic translation factor GTPase family. IF-2 subfamily.

It localises to the cytoplasm. In terms of biological role, one of the essential components for the initiation of protein synthesis. Protects formylmethionyl-tRNA from spontaneous hydrolysis and promotes its binding to the 30S ribosomal subunits. Also involved in the hydrolysis of GTP during the formation of the 70S ribosomal complex. The protein is Translation initiation factor IF-2 of Leifsonia xyli subsp. xyli (strain CTCB07).